Consider the following 469-residue polypeptide: Ribosomal protein uS12 methylthiotransferase RimO (469 aa).

The MTTase N-terminal domain occupies 34–144; the sequence is NKIGFVSLGC…VLEHVHQFAP (111 aa). [4Fe-4S] cluster-binding residues include Cys43, Cys79, Cys108, Cys176, Cys180, and Cys183. The Radical SAM core domain maps to 162–399; the sequence is LTPKHYAYLK…MLVQQEISAA (238 aa). The 67-residue stretch at 402–468 folds into the TRAM domain; it reads QKRIGSTMKV…EYDLWGSLVR (67 aa).

The protein belongs to the methylthiotransferase family. RimO subfamily. The cofactor is [4Fe-4S] cluster.

The protein resides in the cytoplasm. The catalysed reaction is L-aspartate(89)-[ribosomal protein uS12]-hydrogen + (sulfur carrier)-SH + AH2 + 2 S-adenosyl-L-methionine = 3-methylsulfanyl-L-aspartate(89)-[ribosomal protein uS12]-hydrogen + (sulfur carrier)-H + 5'-deoxyadenosine + L-methionine + A + S-adenosyl-L-homocysteine + 2 H(+). In terms of biological role, catalyzes the methylthiolation of an aspartic acid residue of ribosomal protein uS12. This chain is Ribosomal protein uS12 methylthiotransferase RimO, found in Vibrio vulnificus (strain CMCP6).